The primary structure comprises 840 residues: Protein translocase subunit SecA (840 aa).

ATP contacts are provided by residues Q89, 107–111 (GEGKT), and D514.

It belongs to the SecA family. Monomer and homodimer. Part of the essential Sec protein translocation apparatus which comprises SecA, SecYEG and auxiliary proteins SecDF-YajC and YidC.

It localises to the cell inner membrane. The protein localises to the cytoplasm. It catalyses the reaction ATP + H2O + cellular proteinSide 1 = ADP + phosphate + cellular proteinSide 2.. In terms of biological role, part of the Sec protein translocase complex. Interacts with the SecYEG preprotein conducting channel. Has a central role in coupling the hydrolysis of ATP to the transfer of proteins into and across the cell membrane, serving as an ATP-driven molecular motor driving the stepwise translocation of polypeptide chains across the membrane. This chain is Protein translocase subunit SecA, found in Blochmanniella floridana.